A 388-amino-acid polypeptide reads, in one-letter code: Pepsin A-3 (388 aa).

The signal sequence occupies residues 1–15 (MKWLLLLGLVALSEC). The propeptide at 16 to 62 (IMYKVPLIRKKSLRRTLSERGLLKDFLKKHNLNPARKYFPQWKAPTL) is activation peptide. Residues 76 to 385 (YFGTIGIGTP…DRANNQVGLA (310 aa)) form the Peptidase A1 domain. The active site involves Asp94. 2 disulfide bridges follow: Cys107/Cys112 and Cys268/Cys272. Asp277 is an active-site residue. Cys311 and Cys344 form a disulfide bridge.

Belongs to the peptidase A1 family.

It localises to the secreted. The enzyme catalyses Preferential cleavage: hydrophobic, preferably aromatic, residues in P1 and P1' positions. Cleaves 1-Phe-|-Val-2, 4-Gln-|-His-5, 13-Glu-|-Ala-14, 14-Ala-|-Leu-15, 15-Leu-|-Tyr-16, 16-Tyr-|-Leu-17, 23-Gly-|-Phe-24, 24-Phe-|-Phe-25 and 25-Phe-|-Tyr-26 bonds in the B chain of insulin.. Its function is as follows. Shows particularly broad specificity; although bonds involving phenylalanine and leucine are preferred, many others are also cleaved to some extent. This Homo sapiens (Human) protein is Pepsin A-3 (PGA3).